Here is a 179-residue protein sequence, read N- to C-terminus: Ribosome-recycling factor (179 aa).

The protein belongs to the RRF family.

Its subcellular location is the cytoplasm. Responsible for the release of ribosomes from messenger RNA at the termination of protein biosynthesis. May increase the efficiency of translation by recycling ribosomes from one round of translation to another. This is Ribosome-recycling factor from Chlamydia trachomatis serovar D (strain ATCC VR-885 / DSM 19411 / UW-3/Cx).